A 356-amino-acid polypeptide reads, in one-letter code: Protein RecA (356 aa).

71–78 contributes to the ATP binding site; it reads GPESSGKT.

The protein belongs to the RecA family.

Its subcellular location is the cytoplasm. Its function is as follows. Can catalyze the hydrolysis of ATP in the presence of single-stranded DNA, the ATP-dependent uptake of single-stranded DNA by duplex DNA, and the ATP-dependent hybridization of homologous single-stranded DNAs. It interacts with LexA causing its activation and leading to its autocatalytic cleavage. The sequence is that of Protein RecA from Synechococcus elongatus (strain ATCC 33912 / PCC 7942 / FACHB-805) (Anacystis nidulans R2).